The primary structure comprises 393 residues: tRNA-specific 2-thiouridylase MnmA (393 aa).

ATP is bound by residues 19 to 26 (AMSGGVDS) and leucine 45. The active-site Nucleophile is cysteine 113. A disulfide bridge connects residues cysteine 113 and cysteine 210. Residue glycine 137 coordinates ATP. Residues 160–162 (RDQ) form an interaction with tRNA region. Catalysis depends on cysteine 210, which acts as the Cysteine persulfide intermediate.

The protein belongs to the MnmA/TRMU family.

It localises to the cytoplasm. The enzyme catalyses S-sulfanyl-L-cysteinyl-[protein] + uridine(34) in tRNA + AH2 + ATP = 2-thiouridine(34) in tRNA + L-cysteinyl-[protein] + A + AMP + diphosphate + H(+). Catalyzes the 2-thiolation of uridine at the wobble position (U34) of tRNA, leading to the formation of s(2)U34. The chain is tRNA-specific 2-thiouridylase MnmA from Bradyrhizobium diazoefficiens (strain JCM 10833 / BCRC 13528 / IAM 13628 / NBRC 14792 / USDA 110).